A 706-amino-acid polypeptide reads, in one-letter code: Probable rhamnogalacturonate lyase B (706 aa).

An N-terminal signal peptide occupies residues 1-19; sequence MRLLHPLIPASLLLTLTSA. 10 N-linked (GlcNAc...) asparagine glycosylation sites follow: N27, N40, N143, N239, N285, N380, N495, N569, N597, and N638.

This sequence belongs to the polysaccharide lyase 4 family.

It localises to the secreted. The catalysed reaction is Endotype eliminative cleavage of L-alpha-rhamnopyranosyl-(1-&gt;4)-alpha-D-galactopyranosyluronic acid bonds of rhamnogalacturonan I domains in ramified hairy regions of pectin leaving L-rhamnopyranose at the reducing end and 4-deoxy-4,5-unsaturated D-galactopyranosyluronic acid at the non-reducing end.. Its function is as follows. Pectinolytic enzymes consist of four classes of enzymes: pectin lyase, polygalacturonase, pectin methylesterase and rhamnogalacturonase. Degrades the rhamnogalacturonan I (RG-I) backbone of pectin. The chain is Probable rhamnogalacturonate lyase B (rglB) from Aspergillus niger (strain ATCC MYA-4892 / CBS 513.88 / FGSC A1513).